A 400-amino-acid chain; its full sequence is Probable glycosyltransferase WbjE (400 aa).

Belongs to the glycosyltransferase group 1 family. Glycosyltransferase 4 subfamily.

It functions in the pathway bacterial outer membrane biogenesis; LPS O-antigen biosynthesis. The chain is Probable glycosyltransferase WbjE (wbjE) from Pseudomonas aeruginosa.